The following is a 254-amino-acid chain: Homeobox protein Dlx4b (254 aa).

A DNA-binding region (homeobox) is located at residues 129–188 (IRKPRTIYSSVQLQALHQRFQQTQYLALPERADLAAKLGLTQTQVKIWFQNKRSKYKKIM).

It belongs to the distal-less homeobox family.

It localises to the nucleus. During larvae development, may be important for neurocranium morphogenesis. This chain is Homeobox protein Dlx4b (dlx4b), found in Danio rerio (Zebrafish).